The following is a 190-amino-acid chain: Protein GrpE (190 aa).

The interval 1–41 is disordered; it reads MAKEKQEEQQKQTAPENEKAPKKDIKKEASDKKGDQTSKLK.

The protein belongs to the GrpE family. In terms of assembly, homodimer.

It localises to the cytoplasm. Participates actively in the response to hyperosmotic and heat shock by preventing the aggregation of stress-denatured proteins, in association with DnaK and GrpE. It is the nucleotide exchange factor for DnaK and may function as a thermosensor. Unfolded proteins bind initially to DnaJ; upon interaction with the DnaJ-bound protein, DnaK hydrolyzes its bound ATP, resulting in the formation of a stable complex. GrpE releases ADP from DnaK; ATP binding to DnaK triggers the release of the substrate protein, thus completing the reaction cycle. Several rounds of ATP-dependent interactions between DnaJ, DnaK and GrpE are required for fully efficient folding. The chain is Protein GrpE from Limosilactobacillus reuteri (strain DSM 20016) (Lactobacillus reuteri).